The sequence spans 244 residues: Carbonyl reductase [NADPH] 2 (244 aa).

An NADP(+)-binding site is contributed by 11–39 (LVTGAGKGIGRDTVKALHVSGARVVAVTR). A substrate-binding site is contributed by serine 136. Tyrosine 149 serves as the catalytic Proton acceptor. Residue serine 176 is modified to Phosphoserine.

The protein belongs to the short-chain dehydrogenases/reductases (SDR) family. As to quaternary structure, homotetramer. In terms of tissue distribution, lung (ciliated cells, non-ciliated bronchiolar cells and type-II alveolar pneumocytes). Low expression in all extrapulmonary tissues, including adipose tissue.

The protein localises to the mitochondrion matrix. It catalyses the reaction a secondary alcohol + NADP(+) = a ketone + NADPH + H(+). Its activity is regulated as follows. Allosteric enzyme exhibiting negative cooperativity. Activated 2-5 fold by fatty acids. May function in the pulmonary metabolism of endogenous carbonyl compounds, such as aliphatic aldehydes and ketones derived from lipid peroxidation, 3-ketosteroids and fatty aldehydes, as well as in xenobiotic metabolism. The polypeptide is Carbonyl reductase [NADPH] 2 (CBR2) (Sus scrofa (Pig)).